A 236-amino-acid polypeptide reads, in one-letter code: Small ribosomal subunit protein uS3 (236 aa).

Residues 39–107 enclose the KH type-2 domain; sequence IRSYVLEELR…ETSLNIVEIR (69 aa). The interval 214 to 236 is disordered; sequence ASERRATEADQSGSSSNRRRENA.

Belongs to the universal ribosomal protein uS3 family. In terms of assembly, part of the 30S ribosomal subunit. Forms a tight complex with proteins S10 and S14.

Its function is as follows. Binds the lower part of the 30S subunit head. Binds mRNA in the 70S ribosome, positioning it for translation. The polypeptide is Small ribosomal subunit protein uS3 (Bartonella tribocorum (strain CIP 105476 / IBS 506)).